The following is a 107-amino-acid chain: Large ribosomal subunit protein P2-A (107 aa).

A disordered region spans residues 85–107 (GAAAPAAAAEEEEDDDMGFGLFD).

This sequence belongs to the eukaryotic ribosomal protein P1/P2 family. P1 and P2 exist as dimers at the large ribosomal subunit. In terms of processing, phosphorylated.

Its function is as follows. Plays an important role in the elongation step of protein synthesis. This Trypanosoma cruzi protein is Large ribosomal subunit protein P2-A.